The following is a 439-amino-acid chain: MDQLTNHFHAHVAELNRRVAEIVARENLSGLVIHSGQPHRQFLDDMDYPFKVNPHFKAWLPILDNPHCWLLVNGRDKPQLIFYRPVDFWHKVADLPDEFWTAHVDIKLLTKADKVADLLPKDIVDWAYVGEHLDVAEVLGFKTRNPDAVMSYLHYHRATKTEYELACMRKSNEIAVKGHVAAKNAFYNGGSEFEIQQQYLMATNQGENEVPYGNIIALNRNASILHYTKLENQSPQPRRSFLIDAGANFFGYASDITRTYAFEKNIFSELIEAMDRAQLEIIDTMRPGVKYVDLHLATHQKVAQMLIDFDLATGDREGLIEQGITSVFFPHGLGHMLGLQVHDMGGFLHDERGTHIAAPDAHPFLRCTRTLAANQVLTIEPGLYIIDSLLQGLKQDNRQHQVNWNSVDLLRPFGGIRIEDNVIVHSDKNENMTRDLGLD.

The Mn(2+) site is built by aspartate 244, aspartate 255, histidine 335, glutamate 380, and glutamate 419.

The protein belongs to the peptidase M24B family. Bacterial-type prolidase subfamily. It depends on Mn(2+) as a cofactor.

It catalyses the reaction Xaa-L-Pro dipeptide + H2O = an L-alpha-amino acid + L-proline. Splits dipeptides with a prolyl residue in the C-terminal position. The protein is Xaa-Pro dipeptidase of Shewanella sediminis (strain HAW-EB3).